The sequence spans 235 residues: Segregation and condensation protein A (235 aa).

The protein belongs to the ScpA family. As to quaternary structure, component of a cohesin-like complex composed of ScpA, ScpB and the Smc homodimer, in which ScpA and ScpB bind to the head domain of Smc. The presence of the three proteins is required for the association of the complex with DNA.

It localises to the cytoplasm. Functionally, participates in chromosomal partition during cell division. May act via the formation of a condensin-like complex containing Smc and ScpB that pull DNA away from mid-cell into both cell halves. This is Segregation and condensation protein A from Streptococcus equi subsp. equi (strain 4047).